We begin with the raw amino-acid sequence, 285 residues long: Bifunctional protein FolD (285 aa).

NADP(+)-binding positions include 165-167 (GRS) and S190.

The protein belongs to the tetrahydrofolate dehydrogenase/cyclohydrolase family. As to quaternary structure, homodimer.

It catalyses the reaction (6R)-5,10-methylene-5,6,7,8-tetrahydrofolate + NADP(+) = (6R)-5,10-methenyltetrahydrofolate + NADPH. The enzyme catalyses (6R)-5,10-methenyltetrahydrofolate + H2O = (6R)-10-formyltetrahydrofolate + H(+). Its pathway is one-carbon metabolism; tetrahydrofolate interconversion. In terms of biological role, catalyzes the oxidation of 5,10-methylenetetrahydrofolate to 5,10-methenyltetrahydrofolate and then the hydrolysis of 5,10-methenyltetrahydrofolate to 10-formyltetrahydrofolate. The protein is Bifunctional protein FolD of Streptococcus pneumoniae serotype 4 (strain ATCC BAA-334 / TIGR4).